We begin with the raw amino-acid sequence, 392 residues long: Formate-dependent phosphoribosylglycinamide formyltransferase (392 aa).

N(1)-(5-phospho-beta-D-ribosyl)glycinamide-binding positions include 22–23 (EL) and E82. ATP-binding positions include R114, K155, 160-165 (SSGHGQ), 195-198 (EGFI), and E203. In terms of domain architecture, ATP-grasp spans 119-307 (RLAAEELGLK…QFALHARAIL (189 aa)). Residues E266 and E278 each coordinate Mg(2+). N(1)-(5-phospho-beta-D-ribosyl)glycinamide is bound by residues D285, K355, and 362 to 363 (RR).

It belongs to the PurK/PurT family. Homodimer.

It localises to the cell inner membrane. The catalysed reaction is N(1)-(5-phospho-beta-D-ribosyl)glycinamide + formate + ATP = N(2)-formyl-N(1)-(5-phospho-beta-D-ribosyl)glycinamide + ADP + phosphate + H(+). Its pathway is purine metabolism; IMP biosynthesis via de novo pathway; N(2)-formyl-N(1)-(5-phospho-D-ribosyl)glycinamide from N(1)-(5-phospho-D-ribosyl)glycinamide (formate route): step 1/1. In terms of biological role, involved in the de novo purine biosynthesis. Catalyzes the transfer of formate to 5-phospho-ribosyl-glycinamide (GAR), producing 5-phospho-ribosyl-N-formylglycinamide (FGAR). Formate is provided by PurU via hydrolysis of 10-formyl-tetrahydrofolate. This is Formate-dependent phosphoribosylglycinamide formyltransferase from Mannheimia haemolytica (Pasteurella haemolytica).